The primary structure comprises 377 residues: Chaperone protein DnaJ (377 aa).

Positions 4 to 69 (DYYEALGVTR…QKRAAYDRFG (66 aa)) constitute a J domain. The CR-type zinc finger occupies 135–213 (GKTAQIRVPT…CHGQGRVTQE (79 aa)). 8 residues coordinate Zn(2+): Cys148, Cys151, Cys165, Cys168, Cys187, Cys190, Cys201, and Cys204. CXXCXGXG motif repeat units lie at residues 148–155 (CDECSGSG), 165–172 (CTMCSGSG), 187–194 (CPGCNGRG), and 201–208 (CEKCHGQG).

Belongs to the DnaJ family. In terms of assembly, homodimer. Requires Zn(2+) as cofactor.

Its subcellular location is the cytoplasm. Participates actively in the response to hyperosmotic and heat shock by preventing the aggregation of stress-denatured proteins and by disaggregating proteins, also in an autonomous, DnaK-independent fashion. Unfolded proteins bind initially to DnaJ; upon interaction with the DnaJ-bound protein, DnaK hydrolyzes its bound ATP, resulting in the formation of a stable complex. GrpE releases ADP from DnaK; ATP binding to DnaK triggers the release of the substrate protein, thus completing the reaction cycle. Several rounds of ATP-dependent interactions between DnaJ, DnaK and GrpE are required for fully efficient folding. Also involved, together with DnaK and GrpE, in the DNA replication of plasmids through activation of initiation proteins. The sequence is that of Chaperone protein DnaJ from Brucella abortus (strain S19).